The following is a 362-amino-acid chain: Mannose-1-phosphate guanyltransferase (362 aa).

This sequence belongs to the transferase hexapeptide repeat family.

It is found in the cytoplasm. It carries out the reaction alpha-D-mannose 1-phosphate + GTP + H(+) = GDP-alpha-D-mannose + diphosphate. Its pathway is nucleotide-sugar biosynthesis; GDP-alpha-D-mannose biosynthesis; GDP-alpha-D-mannose from alpha-D-mannose 1-phosphate (GTP route): step 1/1. Involved in cell wall synthesis where it is required for glycosylation. Involved in cell cycle progression through cell-size checkpoint. This Debaryomyces hansenii (strain ATCC 36239 / CBS 767 / BCRC 21394 / JCM 1990 / NBRC 0083 / IGC 2968) (Yeast) protein is Mannose-1-phosphate guanyltransferase (MPG1).